The sequence spans 192 residues: Adenylate kinase (192 aa).

11-16 (GSGKGT) provides a ligand contact to ATP. An NMP region spans residues 31-60 (STGDIFRANVKGETPLGIEAKKYMDNGDFV). AMP is bound by residues Thr32, Arg37, 58–60 (DFV), 86–89 (GYPR), and Gln93. Positions 127-137 (GRAKETGRSDD) are LID. Residue Arg128 coordinates ATP. Positions 134 and 145 each coordinate AMP. Gly173 is a binding site for ATP.

It belongs to the adenylate kinase family. In terms of assembly, monomer.

Its subcellular location is the cytoplasm. It catalyses the reaction AMP + ATP = 2 ADP. It functions in the pathway purine metabolism; AMP biosynthesis via salvage pathway; AMP from ADP: step 1/1. In terms of biological role, catalyzes the reversible transfer of the terminal phosphate group between ATP and AMP. Plays an important role in cellular energy homeostasis and in adenine nucleotide metabolism. This chain is Adenylate kinase, found in Pseudarthrobacter chlorophenolicus (strain ATCC 700700 / DSM 12829 / CIP 107037 / JCM 12360 / KCTC 9906 / NCIMB 13794 / A6) (Arthrobacter chlorophenolicus).